The following is a 169-amino-acid chain: Putative hydrogenase maturation protease MJ0631 (169 aa).

It belongs to the peptidase A31 family.

This is Putative hydrogenase maturation protease MJ0631 from Methanocaldococcus jannaschii (strain ATCC 43067 / DSM 2661 / JAL-1 / JCM 10045 / NBRC 100440) (Methanococcus jannaschii).